The primary structure comprises 91 residues: Small ribosomal subunit protein uS19 (91 aa).

The protein belongs to the universal ribosomal protein uS19 family.

In terms of biological role, protein S19 forms a complex with S13 that binds strongly to the 16S ribosomal RNA. In Pseudoalteromonas atlantica (strain T6c / ATCC BAA-1087), this protein is Small ribosomal subunit protein uS19.